Reading from the N-terminus, the 118-residue chain is Large ribosomal subunit protein bL20 (118 aa).

It belongs to the bacterial ribosomal protein bL20 family.

In terms of biological role, binds directly to 23S ribosomal RNA and is necessary for the in vitro assembly process of the 50S ribosomal subunit. It is not involved in the protein synthesizing functions of that subunit. The sequence is that of Large ribosomal subunit protein bL20 from Marinomonas sp. (strain MWYL1).